A 381-amino-acid polypeptide reads, in one-letter code: DnaJ-related protein spj1 (381 aa).

In terms of domain architecture, J spans asparagine 5–glutamate 74. The disordered stretch occupies residues glycine 72–glycine 93. Gly residues predominate over residues glycine 78–glycine 93. The segment at glycine 138–valine 225 adopts a CR-type zinc-finger fold. CXXCXGXG motif repeat units lie at residues cysteine 151–glycine 158, cysteine 172–glycine 179, cysteine 199–glycine 206, and cysteine 213–arginine 220. Residues phenylalanine 378–leucine 381 carry the Prevents secretion from ER motif.

It is found in the endoplasmic reticulum. This is DnaJ-related protein spj1 (spj1) from Schizosaccharomyces pombe (strain 972 / ATCC 24843) (Fission yeast).